Consider the following 486-residue polypeptide: tRNA sulfurtransferase (486 aa).

The THUMP domain maps to 60 to 166 (QKICAMLINI…DNQLFIIIKR (107 aa)). Residues 184 to 185 (LI), K266, G288, and Q297 each bind ATP. C345 and C458 are joined by a disulfide. A Rhodanese domain is found at 406–484 (LDSTDVVLDI…GFSNVKIYRP (79 aa)). The Cysteine persulfide intermediate role is filled by C458.

Belongs to the ThiI family.

The protein localises to the cytoplasm. The enzyme catalyses [ThiI sulfur-carrier protein]-S-sulfanyl-L-cysteine + a uridine in tRNA + 2 reduced [2Fe-2S]-[ferredoxin] + ATP + H(+) = [ThiI sulfur-carrier protein]-L-cysteine + a 4-thiouridine in tRNA + 2 oxidized [2Fe-2S]-[ferredoxin] + AMP + diphosphate. It carries out the reaction [ThiS sulfur-carrier protein]-C-terminal Gly-Gly-AMP + S-sulfanyl-L-cysteinyl-[cysteine desulfurase] + AH2 = [ThiS sulfur-carrier protein]-C-terminal-Gly-aminoethanethioate + L-cysteinyl-[cysteine desulfurase] + A + AMP + 2 H(+). It participates in cofactor biosynthesis; thiamine diphosphate biosynthesis. In terms of biological role, catalyzes the ATP-dependent transfer of a sulfur to tRNA to produce 4-thiouridine in position 8 of tRNAs, which functions as a near-UV photosensor. Also catalyzes the transfer of sulfur to the sulfur carrier protein ThiS, forming ThiS-thiocarboxylate. This is a step in the synthesis of thiazole, in the thiamine biosynthesis pathway. The sulfur is donated as persulfide by IscS. The polypeptide is tRNA sulfurtransferase (Blochmanniella pennsylvanica (strain BPEN)).